Reading from the N-terminus, the 321-residue chain is ATP-dependent 6-phosphofructokinase (321 aa).

Glycine 12 is a binding site for ATP. ADP contacts are provided by residues 22 to 26 (RAVVR) and 55 to 60 (RYSVSD). ATP contacts are provided by residues 73-74 (RF) and 103-106 (GDGS). Aspartate 104 contacts Mg(2+). Position 127 to 129 (127 to 129 (TID)) interacts with substrate. Aspartate 129 acts as the Proton acceptor in catalysis. Residue arginine 156 coordinates ADP. Substrate is bound by residues arginine 164 and 171–173 (MGR). ADP-binding positions include 187-189 (GCE) and 215-217 (KRH). Substrate contacts are provided by residues glutamate 224, arginine 245, and 251–254 (HVQR).

Belongs to the phosphofructokinase type A (PFKA) family. ATP-dependent PFK group I subfamily. Prokaryotic clade 'B1' sub-subfamily. In terms of assembly, homotetramer. The cofactor is Mg(2+).

The protein resides in the cytoplasm. The enzyme catalyses beta-D-fructose 6-phosphate + ATP = beta-D-fructose 1,6-bisphosphate + ADP + H(+). The protein operates within carbohydrate degradation; glycolysis; D-glyceraldehyde 3-phosphate and glycerone phosphate from D-glucose: step 3/4. Its activity is regulated as follows. Allosterically activated by ADP and other diphosphonucleosides, and allosterically inhibited by phosphoenolpyruvate. Catalyzes the phosphorylation of D-fructose 6-phosphate to fructose 1,6-bisphosphate by ATP, the first committing step of glycolysis. This Actinobacillus succinogenes (strain ATCC 55618 / DSM 22257 / CCUG 43843 / 130Z) protein is ATP-dependent 6-phosphofructokinase.